The primary structure comprises 84 residues: ATP synthase subunit c (84 aa).

2 helical membrane-spanning segments follow: residues Met1–Gly21 and Leu53–Ile73.

It belongs to the ATPase C chain family. In terms of assembly, F-type ATPases have 2 components, F(1) - the catalytic core - and F(0) - the membrane proton channel. F(1) has five subunits: alpha(3), beta(3), gamma(1), delta(1), epsilon(1). F(0) has three main subunits: a(1), b(2) and c(10-14). The alpha and beta chains form an alternating ring which encloses part of the gamma chain. F(1) is attached to F(0) by a central stalk formed by the gamma and epsilon chains, while a peripheral stalk is formed by the delta and b chains.

It is found in the cell inner membrane. Functionally, f(1)F(0) ATP synthase produces ATP from ADP in the presence of a proton or sodium gradient. F-type ATPases consist of two structural domains, F(1) containing the extramembraneous catalytic core and F(0) containing the membrane proton channel, linked together by a central stalk and a peripheral stalk. During catalysis, ATP synthesis in the catalytic domain of F(1) is coupled via a rotary mechanism of the central stalk subunits to proton translocation. Key component of the F(0) channel; it plays a direct role in translocation across the membrane. A homomeric c-ring of between 10-14 subunits forms the central stalk rotor element with the F(1) delta and epsilon subunits. This is ATP synthase subunit c from Dictyoglomus thermophilum (strain ATCC 35947 / DSM 3960 / H-6-12).